Reading from the N-terminus, the 403-residue chain is High affinity transport system protein p37 (403 aa).

The first 23 residues, 1 to 23 (MLKKLKNFILFSSIFSPIAFAIS), serve as a signal peptide directing secretion. The N-palmitoyl cysteine moiety is linked to residue Cys24. The S-diacylglycerol cysteine moiety is linked to residue Cys24.

It is found in the cell membrane. P37 is part of a high-affinity transport system. This Mesomycoplasma hyorhinis (Mycoplasma hyorhinis) protein is High affinity transport system protein p37 (p37).